The primary structure comprises 351 residues: S-adenosylmethionine:tRNA ribosyltransferase-isomerase (351 aa).

This sequence belongs to the QueA family. In terms of assembly, monomer.

The protein resides in the cytoplasm. It catalyses the reaction 7-aminomethyl-7-carbaguanosine(34) in tRNA + S-adenosyl-L-methionine = epoxyqueuosine(34) in tRNA + adenine + L-methionine + 2 H(+). It participates in tRNA modification; tRNA-queuosine biosynthesis. Transfers and isomerizes the ribose moiety from AdoMet to the 7-aminomethyl group of 7-deazaguanine (preQ1-tRNA) to give epoxyqueuosine (oQ-tRNA). This Hyphomonas neptunium (strain ATCC 15444) protein is S-adenosylmethionine:tRNA ribosyltransferase-isomerase.